The chain runs to 151 residues: uncharacterized protein (151 aa).

3 4Fe-4S ferredoxin-type domains span residues 4–32 (KIIV…ESRV), 33–63 (RKVD…YLKD), and 64–93 (GIPI…IKNR). Residues Cys-13, Cys-16, Cys-19, Cys-23, Cys-42, Cys-45, Cys-50, Cys-54, Cys-73, Cys-76, Cys-79, Cys-83, Cys-98, Cys-101, Cys-111, and Cys-115 each contribute to the [4Fe-4S] cluster site.

It depends on [4Fe-4S] cluster as a cofactor.

This is an uncharacterized protein from Methanocaldococcus jannaschii (strain ATCC 43067 / DSM 2661 / JAL-1 / JCM 10045 / NBRC 100440) (Methanococcus jannaschii).